We begin with the raw amino-acid sequence, 387 residues long: MEDDAPVIYGLEFQARALTAQTAETDAIRFLVGTQSLKFDNQIHIIDFDDENNMINKSVLLHDAGEIWHISGSPADKAVLTTCYNKTSESRVLTCAAVWRMPPEWESGNHESPDDSSNNPQTLELLCHLDNSAHGSMACVLWEPMGDGKRVISLAENHVLLWDLQESSAKATISSSATLEGKGQLKFTAGKWSPHHNCTQLATANDTAIRGWDLRSMSQIYCIENAHGQLVRDLDFNPNKQYYLASCGDDCKVKFWDVRHISEPVKCLEEHSHWVWSVRYNHSHDQLLLTASSDSRVILSNMVSISSEPFGHLVDDDDLSDPEENQQEDKGKEPLQDSIISTYEEHEDSVYAVEWSAADPWLFASLSYDGRLVINRVPRALKYRILL.

WD repeat units lie at residues 132 to 172, 182 to 222, 226 to 266, and 270 to 310; these read SAHG…AKAT, KGQL…QIYC, AHGQ…EPVK, and EHSH…SEPF. The disordered stretch occupies residues 309 to 337; the sequence is PFGHLVDDDDLSDPEENQQEDKGKEPLQD. A compositionally biased stretch (acidic residues) spans 315–326; it reads DDDDLSDPEENQ. The stretch at 345-385 is one WD 5 repeat; the sequence is EHEDSVYAVEWSAADPWLFASLSYDGRLVINRVPRALKYRI.

It belongs to the WD repeat EIPR1 family.

The protein localises to the golgi apparatus. It localises to the trans-Golgi network. May act as a component of endosomal retrieval machinery that is involved in protein transport from early endosomes to either recycling endosomes or the trans-Golgi network. The sequence is that of EARP-interacting protein homolog from Danio rerio (Zebrafish).